A 213-amino-acid polypeptide reads, in one-letter code: Adenylate kinase (213 aa).

10–15 (GAGKGT) provides a ligand contact to ATP. Residues 30-59 (STGDMFRAAIKEGTEMGKKAKEYMDKGALV) form an NMP region. Residues Thr-31, Arg-36, 57 to 59 (ALV), 85 to 88 (GFPR), and Gln-92 each bind AMP. The LID stretch occupies residues 126–163 (GRRVCKNCGASYHVIFNPPQAEGKCNSCNGELYQRSDD). Arg-127 is a binding site for ATP. The Zn(2+) site is built by Cys-130 and Cys-133. 136 to 137 (SY) lines the ATP pocket. Zn(2+) contacts are provided by Cys-150 and Cys-153. Positions 160 and 171 each coordinate AMP. Gln-199 lines the ATP pocket.

The protein belongs to the adenylate kinase family. Monomer.

The protein localises to the cytoplasm. The enzyme catalyses AMP + ATP = 2 ADP. Its pathway is purine metabolism; AMP biosynthesis via salvage pathway; AMP from ADP: step 1/1. Functionally, catalyzes the reversible transfer of the terminal phosphate group between ATP and AMP. Plays an important role in cellular energy homeostasis and in adenine nucleotide metabolism. This Desulforamulus reducens (strain ATCC BAA-1160 / DSM 100696 / MI-1) (Desulfotomaculum reducens) protein is Adenylate kinase.